A 109-amino-acid polypeptide reads, in one-letter code: Phosphoribosyl-ATP pyrophosphatase (109 aa).

It belongs to the PRA-PH family.

It localises to the cytoplasm. It catalyses the reaction 1-(5-phospho-beta-D-ribosyl)-ATP + H2O = 1-(5-phospho-beta-D-ribosyl)-5'-AMP + diphosphate + H(+). Its pathway is amino-acid biosynthesis; L-histidine biosynthesis; L-histidine from 5-phospho-alpha-D-ribose 1-diphosphate: step 2/9. The chain is Phosphoribosyl-ATP pyrophosphatase from Sphingopyxis alaskensis (strain DSM 13593 / LMG 18877 / RB2256) (Sphingomonas alaskensis).